A 229-amino-acid polypeptide reads, in one-letter code: Germin-like protein 3-6 (229 aa).

Residues 1 to 31 (MEHSFKTIAAGVVIVVLLLQQAPVLIRATDA) form the signal peptide. A disulfide bridge connects residues Cys-38 and Cys-53. The Cupin type-1 domain occupies 67-219 (SKIATGGDVN…ALRVDAGVVE (153 aa)). Residues Asn-80 and Asn-83 are each glycosylated (N-linked (GlcNAc...) asparagine). Residues His-116, His-118, Glu-123, and His-165 each coordinate Mn(2+).

The protein belongs to the germin family. In terms of assembly, oligomer (believed to be a pentamer but probably hexamer).

It localises to the secreted. The protein localises to the extracellular space. The protein resides in the apoplast. Functionally, may play a role in plant defense. Probably has no oxalate oxidase activity even if the active site is conserved. This Oryza sativa subsp. japonica (Rice) protein is Germin-like protein 3-6.